Consider the following 266-residue polypeptide: Putative pyruvate, phosphate dikinase regulatory protein (266 aa).

149-156 contacts ADP; it reads GVSRTSKT.

This sequence belongs to the pyruvate, phosphate/water dikinase regulatory protein family. PDRP subfamily.

The catalysed reaction is N(tele)-phospho-L-histidyl/L-threonyl-[pyruvate, phosphate dikinase] + ADP = N(tele)-phospho-L-histidyl/O-phospho-L-threonyl-[pyruvate, phosphate dikinase] + AMP + H(+). The enzyme catalyses N(tele)-phospho-L-histidyl/O-phospho-L-threonyl-[pyruvate, phosphate dikinase] + phosphate + H(+) = N(tele)-phospho-L-histidyl/L-threonyl-[pyruvate, phosphate dikinase] + diphosphate. Functionally, bifunctional serine/threonine kinase and phosphorylase involved in the regulation of the pyruvate, phosphate dikinase (PPDK) by catalyzing its phosphorylation/dephosphorylation. This Geobacillus sp. (strain WCH70) protein is Putative pyruvate, phosphate dikinase regulatory protein.